Here is a 346-residue protein sequence, read N- to C-terminus: NADH-ubiquinone oxidoreductase chain 2 (346 aa).

10 helical membrane-spanning segments follow: residues 25–45, 52–72, 95–115, 124–144, 149–169, 178–196, 200–219, 247–267, 274–294, and 326–346; these read HWIL…PLIS, AIEA…LILF, CLIL…HFWF, LITA…LLLM, LNPA…GWMG, ILAF…IIIY, LTIL…FLSL, TLLS…WLII, EMTP…FFYL, and AILT…TTLV.

This sequence belongs to the complex I subunit 2 family.

It is found in the mitochondrion inner membrane. The enzyme catalyses a ubiquinone + NADH + 5 H(+)(in) = a ubiquinol + NAD(+) + 4 H(+)(out). Core subunit of the mitochondrial membrane respiratory chain NADH dehydrogenase (Complex I) that is believed to belong to the minimal assembly required for catalysis. Complex I functions in the transfer of electrons from NADH to the respiratory chain. The immediate electron acceptor for the enzyme is believed to be ubiquinone. The polypeptide is NADH-ubiquinone oxidoreductase chain 2 (MT-ND2) (Coturnix japonica (Japanese quail)).